We begin with the raw amino-acid sequence, 72 residues long: SRY-related protein ADW2 (72 aa).

The HMG box DNA-binding region spans valine 1–lysine 69.

The protein localises to the nucleus. The chain is SRY-related protein ADW2 from Alligator mississippiensis (American alligator).